Here is a 1175-residue protein sequence, read N- to C-terminus: Phospholipid-transporting ATPase IF (1175 aa).

4 helical membrane-spanning segments follow: residues 69-89 (FYFLIIFLVQLMIDTPTSPIT), 91-111 (GLPLFFVITVTAIKQGYEDWL), 287-307 (NTFLIIYLIILISEAIISTIL), and 338-358 (FISDFLAFLVLYNFIIPISLY). Asp-407 acts as the 4-aspartylphosphate intermediate in catalysis. ATP-binding residues include Asp-407, Lys-408, Thr-409, Glu-530, Phe-571, Lys-594, Arg-625, Thr-705, Gly-706, Asp-707, Arg-793, and Lys-799. Asp-407 lines the Mg(2+) pocket. Thr-409 lines the Mg(2+) pocket. Asp-820 provides a ligand contact to Mg(2+). Positions 823 and 824 each coordinate ATP. Residue Asp-824 participates in Mg(2+) binding. Helical transmembrane passes span 862–882 (LLFVHGHFYYIRIATLVQYFF), 910–930 (VYLTLYNICFTSLPVLIYSLV), 963–983 (WTVLGFSHAFIFFFGSYFLVG), 994–1014 (MFGNWTFGTLVFTVMVITVTV), 1033–1053 (GSIIFYFIFSLFYGGILWPFL), and 1060–1080 (FVFIQLLSSGSAWFAILLMVV).

Belongs to the cation transport ATPase (P-type) (TC 3.A.3) family. Type IV subfamily. As to quaternary structure, component of a P4-ATPase flippase complex which consists of a catalytic alpha subunit ATP11B and an accessory beta subunit TMEM30A. Mg(2+) is required as a cofactor. As to expression, expressed in retina, brain, liver, testes and kidney (at protein level).

It localises to the recycling endosome membrane. The protein resides in the early endosome. It is found in the endoplasmic reticulum. The protein localises to the golgi apparatus. Its subcellular location is the trans-Golgi network. It carries out the reaction ATP + H2O + phospholipidSide 1 = ADP + phosphate + phospholipidSide 2.. The enzyme catalyses a 1,2-diacyl-sn-glycero-3-phospho-L-serine(out) + ATP + H2O = a 1,2-diacyl-sn-glycero-3-phospho-L-serine(in) + ADP + phosphate + H(+). It catalyses the reaction a 1,2-diacyl-sn-glycero-3-phosphoethanolamine(out) + ATP + H2O = a 1,2-diacyl-sn-glycero-3-phosphoethanolamine(in) + ADP + phosphate + H(+). In terms of biological role, catalytic component of a P4-ATPase flippase complex which catalyzes the hydrolysis of ATP coupled to the transport of aminophospholipids, phosphatidylserines (PS) and phosphatidylethanolamines (PE), from the outer to the inner leaflet of intracellular membranes. May contribute to the maintenance of membrane lipid asymmetry in endosome compartment. The protein is Phospholipid-transporting ATPase IF of Mus musculus (Mouse).